We begin with the raw amino-acid sequence, 134 residues long: Cytochrome b5 (134 aa).

Alanine 2 carries the post-translational modification N-acetylalanine. N6-acetyllysine occurs at positions 7, 10, and 19. One can recognise a Cytochrome b5 heme-binding domain in the interval 9–85 (VKYYTLEEIQ…SKTYIIGELH (77 aa)). The heme site is built by histidine 44 and histidine 68. The chain crosses the membrane as a helical span at residues 109–131 (WWTNWVIPAISALVVALMYRLYM).

The protein belongs to the cytochrome b5 family.

Its subcellular location is the endoplasmic reticulum membrane. The protein localises to the microsome membrane. In terms of biological role, cytochrome b5 is a membrane-bound hemoprotein functioning as an electron carrier for several membrane-bound oxygenases. It is also involved in several steps of the sterol biosynthesis pathway, particularly in the C-6 double bond introduction during the C-6 desaturation. The polypeptide is Cytochrome b5 (Cyb5a) (Rattus norvegicus (Rat)).